We begin with the raw amino-acid sequence, 398 residues long: Lysophosphatidylserine lipase ABHD12 (398 aa).

Over residues 1-15 (MRKRTEPVTLEHERC) the composition is skewed to basic and acidic residues. The interval 1 to 24 (MRKRTEPVTLEHERCAASGSSSSG) is disordered. Residues 1–74 (MRKRTEPVTL…RKSLWFRLRK (74 aa)) are Cytoplasmic-facing. Residues 75–95 (ILLCVLGFYIAIPFLVKLCPG) form a helical membrane-spanning segment. Residues 96 to 398 (IQAKLIFLNF…LGKSEPERQH (303 aa)) lie on the Extracellular side of the membrane. A glycan (N-linked (GlcNAc...) asparagine) is linked at N123. The active-site Nucleophile is the S246. Catalysis depends on charge relay system residues D333 and H372.

This sequence belongs to the serine esterase family.

The protein resides in the endoplasmic reticulum membrane. The enzyme catalyses 1-(9Z-octadecenoyl)-sn-glycero-3-phospho-L-serine + H2O = sn-glycero-3-phospho-L-serine + (9Z)-octadecenoate + H(+). It catalyses the reaction 1-(9Z-octadecenoyl)-sn-glycero-3-phospho-(1'-sn-glycerol) + H2O = sn-glycero-3-phospho-(1'-sn-glycerol) + (9Z)-octadecenoate + H(+). It carries out the reaction 1-(9Z-octadecenoyl)-sn-glycero-3-phospho-(1D-myo-inositol) + H2O = sn-glycero-3-phospho-1D-myo-inositol + (9Z)-octadecenoate + H(+). The catalysed reaction is 1-(9Z-octadecenoyl)-sn-glycero-3-phosphoethanolamine + H2O = sn-glycero-3-phosphoethanolamine + (9Z)-octadecenoate + H(+). The enzyme catalyses 1-(9Z-octadecenoyl)-sn-glycero-3-phosphocholine + H2O = 1-(9Z-octadecenoyl)-sn-glycerol + phosphocholine + H(+). It catalyses the reaction 2-(9Z-octadecenoyl)-glycerol + H2O = glycerol + (9Z)-octadecenoate + H(+). It carries out the reaction 1-hexadecanoyl-sn-glycero-3-phospho-L-serine + H2O = sn-glycero-3-phospho-L-serine + hexadecanoate + H(+). The catalysed reaction is 2-(5Z,8Z,11Z,14Z-eicosatetraenoyl)-glycerol + H2O = glycerol + (5Z,8Z,11Z,14Z)-eicosatetraenoate + H(+). The enzyme catalyses Hydrolyzes glycerol monoesters of long-chain fatty acids.. It catalyses the reaction 1-decanoylglycerol + H2O = decanoate + glycerol + H(+). It carries out the reaction 1-dodecanoylglycerol + H2O = dodecanoate + glycerol + H(+). The catalysed reaction is 1-tetradecanoylglycerol + H2O = tetradecanoate + glycerol + H(+). The enzyme catalyses 2-hexadecanoylglycerol + H2O = glycerol + hexadecanoate + H(+). It catalyses the reaction 1-(9Z-octadecenoyl)-glycerol + H2O = glycerol + (9Z)-octadecenoate + H(+). It carries out the reaction 2-(9Z,12Z-octadecadienoyl)-glycerol + H2O = (9Z,12Z)-octadecadienoate + glycerol + H(+). The catalysed reaction is 1-(5Z,8Z,11Z,14Z-eicosatetraenoyl)-glycerol + H2O = glycerol + (5Z,8Z,11Z,14Z)-eicosatetraenoate + H(+). The enzyme catalyses 1-(9Z,12Z-octadecadienoyl)-glycerol + H2O = (9Z,12Z)-octadecadienoate + glycerol + H(+). It catalyses the reaction 1-hexadecanoylglycerol + H2O = glycerol + hexadecanoate + H(+). It carries out the reaction 1-octadecanoylglycerol + H2O = octadecanoate + glycerol + H(+). The catalysed reaction is 1-octadecanoyl-2-(9,10-epoxyoctadecanoyl)-sn-glycero-3-phospho-L-serine + H2O = 9,10-epoxyoctadecanoate + 1-octadecanoyl-sn-glycero-3-phosphoserine + H(+). The enzyme catalyses 1-octadecanoyl-2-(10-hydroxyoctadecanoyl)-sn-glycero-3-phospho-L-serine + H2O = 1-octadecanoyl-sn-glycero-3-phosphoserine + 10-hydroxyoctadecanoate + H(+). It catalyses the reaction 1-hexadecanoyl-2-(10-hydroxyoctadecanoyl)-sn-glycero-3-phospho-L-serine + H2O = 10-hydroxyoctadecanoate + 1-hexadecanoyl-sn-glycero-3-phospho-L-serine + H(+). Functionally, lysophosphatidylserine (LPS) lipase that mediates the hydrolysis of lysophosphatidylserine, a class of signaling lipids that regulates immunological and neurological processes. Represents a major lysophosphatidylserine lipase in the brain, thereby playing a key role in the central nervous system. Also able to hydrolyze oxidized phosphatidylserine; oxidized phosphatidylserine is produced in response to severe inflammatory stress and constitutes a proapoptotic 'eat me' signal. Also has monoacylglycerol (MAG) lipase activity: hydrolyzes 2-arachidonoylglycerol (2-AG), thereby acting as a regulator of endocannabinoid signaling pathways. Has a strong preference for very-long-chain lipid substrates; substrate specificity is likely due to improved catalysis and not improved substrate binding. The protein is Lysophosphatidylserine lipase ABHD12 of Rattus norvegicus (Rat).